The primary structure comprises 155 residues: Endoribonuclease YbeY (155 aa).

3 residues coordinate Zn(2+): His120, His124, and His130.

The protein belongs to the endoribonuclease YbeY family. Zn(2+) serves as cofactor.

Its subcellular location is the cytoplasm. Functionally, single strand-specific metallo-endoribonuclease involved in late-stage 70S ribosome quality control and in maturation of the 3' terminus of the 16S rRNA. This chain is Endoribonuclease YbeY, found in Staphylococcus aureus (strain Mu3 / ATCC 700698).